Reading from the N-terminus, the 65-residue chain is Small ribosomal subunit protein eS27 (65 aa).

Zn(2+)-binding residues include Cys20, Cys23, Cys39, and Cys42. The C4-type zinc-finger motif lies at 20–42 (CIDCGNEQIVFSHPATRVRCLVC).

It belongs to the eukaryotic ribosomal protein eS27 family. In terms of assembly, part of the 30S ribosomal subunit. The cofactor is Zn(2+).

The polypeptide is Small ribosomal subunit protein eS27 (Pyrococcus horikoshii (strain ATCC 700860 / DSM 12428 / JCM 9974 / NBRC 100139 / OT-3)).